The primary structure comprises 1187 residues: uncharacterized protein (1187 aa).

5 disordered regions span residues 302–405 (QKSQ…KPVG), 419–451 (QAFS…RASK), 511–551 (KAPG…LRLE), 1095–1134 (KSQR…KLPD), and 1148–1187 (PHLP…PASL). Positions 321–333 (LPLSGPAGAPPLG) are enriched in low complexity. Residues 352-361 (SRRKARHKAS) show a composition bias toward basic residues. Composition is skewed to low complexity over residues 422–435 (SPLL…SPAA) and 517–534 (GTTL…GEPP). Positions 1096-1107 (SQRTPQGEQSRN) are enriched in polar residues. Residues 1160-1174 (TGGSFSSEGTGSQTS) are compositionally biased toward low complexity.

This is an uncharacterized protein from Mus musculus (Mouse).